The chain runs to 185 residues: CASP-like protein 2C1 (185 aa).

The Cytoplasmic segment spans residues 1–12; that stretch reads MVAARVSEVKAE. A helical membrane pass occupies residues 13–33; sequence GVLRGACAALAAAAALLVGLS. At 34-52 the chain is on the extracellular side; it reads TQTETVLLVRKKATVKDVQ. A helical membrane pass occupies residues 53 to 73; sequence ALWVLAMAAAAAAGYHLLQLL. The Cytoplasmic segment spans residues 74-105; the sequence is KCFYLGRRVGGGASPCRRSSRALAWTCLLLDK. The chain crosses the membrane as a helical span at residues 106–126; sequence ACAYTTFATTVAAAQACVIAL. Residues 127–147 are Extracellular-facing; it reads DGAHALQWTKLCNIYTRFCEQ. Residues 148 to 168 form a helical membrane-spanning segment; the sequence is IAGSLVLGMLAAVGTAVLSAA. Over 169-185 the chain is Cytoplasmic; it reads SARNVFRHYSPGTYAAH.

This sequence belongs to the Casparian strip membrane proteins (CASP) family. As to quaternary structure, homodimer and heterodimers.

The protein localises to the cell membrane. The protein is CASP-like protein 2C1 of Sorghum bicolor (Sorghum).